The sequence spans 705 residues: Ribosomal RNA large subunit methyltransferase K/L (705 aa).

Residues Val43–Leu154 form the THUMP domain.

It belongs to the methyltransferase superfamily. RlmKL family.

It localises to the cytoplasm. It catalyses the reaction guanosine(2445) in 23S rRNA + S-adenosyl-L-methionine = N(2)-methylguanosine(2445) in 23S rRNA + S-adenosyl-L-homocysteine + H(+). It carries out the reaction guanosine(2069) in 23S rRNA + S-adenosyl-L-methionine = N(2)-methylguanosine(2069) in 23S rRNA + S-adenosyl-L-homocysteine + H(+). Functionally, specifically methylates the guanine in position 2445 (m2G2445) and the guanine in position 2069 (m7G2069) of 23S rRNA. This Aliivibrio fischeri (strain ATCC 700601 / ES114) (Vibrio fischeri) protein is Ribosomal RNA large subunit methyltransferase K/L.